The following is a 527-amino-acid chain: Tubulin-specific chaperone E (527 aa).

An N-acetylserine modification is found at S2. Residues 27–71 (GVVPPVAGPWLGVEWDNPERGKHDGSHEGTVYFQCRHPTGGSFIR) enclose the CAP-Gly domain. 7 LRR repeats span residues 154–175 (NIRK…IHIA), 180–200 (HLEV…SVLT), 205–226 (ALKV…RCAM), 230–252 (GLEE…DVLQ), 253–274 (TVKL…YLIA), 278–299 (RLEQ…DAGI), and 308–329 (SLKY…NELD). Residues 342–384 (NPLTKEDKEAETARLLIIASIGQLKTLNKCEILPEERRRAELD) enclose the LRRCT domain. K463 is modified (N6-acetyllysine). At S495 the chain carries Phosphoserine.

The protein belongs to the TBCE family. In terms of assembly, supercomplex made of cofactors A to E. Cofactors A and D function by capturing and stabilizing tubulin in a quasi-native conformation. Cofactor E binds to the cofactor D-tubulin complex; interaction with cofactor C then causes the release of tubulin polypeptides that are committed to the native state. Cofactors B and E can form a heterodimer which binds to alpha-tubulin and enhances their ability to dissociate tubulin heterodimers. Interacts with TBCD.

The protein resides in the cytoplasm. It is found in the cytoskeleton. Functionally, tubulin-folding protein; involved in the second step of the tubulin folding pathway and in the regulation of tubulin heterodimer dissociation. Required for correct organization of microtubule cytoskeleton and mitotic splindle, and maintenance of the neuronal microtubule network. This chain is Tubulin-specific chaperone E (TBCE), found in Pongo abelii (Sumatran orangutan).